The chain runs to 287 residues: Probable glucose uptake protein GlcU (287 aa).

9 helical membrane passes run 7 to 29 (LIALLPALFWGSVVLINVFVGGG), 34 to 56 (IRGTTLGALIVGLGLLITGFAKF), 58 to 75 (NPTVIIVGLISGALWAFG), 114 to 136 (WSSMTQIIFGLIAMILLVTGVAL), 156 to 178 (MGILIVSTVGYVGFVVLGDIFGV), 183 to 202 (ALFFQSVGMAIGGFILSMNH), 209 to 228 (TALNLLPGVIWGIGNLFMFY), 233 to 255 (VGVATSFSLSQLLVIVSTLGGIF), and 267 to 286 (TGIWVGIIIIVIAAIILGNL).

The protein belongs to the GRP transporter (TC 2.A.7.5) family.

The protein localises to the cell membrane. Involved in the uptake of glucose. The protein is Probable glucose uptake protein GlcU (glcU) of Staphylococcus aureus (strain MRSA252).